A 358-amino-acid polypeptide reads, in one-letter code: Valine dehydrogenase (358 aa).

The active site involves Lys88. 188–194 (GVGKVGH) provides a ligand contact to NAD(+).

The protein belongs to the Glu/Leu/Phe/Val dehydrogenases family. Homodimer.

Its subcellular location is the cytoplasm. It catalyses the reaction L-valine + NAD(+) + H2O = 3-methyl-2-oxobutanoate + NH4(+) + NADH + H(+). Its pathway is amino-acid degradation; L-valine degradation. Functionally, oxidative deamination of branched-chain amino acids. The catabolism of valine is the major source of fatty acid precursors for macrolide biosynthesis and a vital source of antibiotic precursors. This Streptomyces virginiae (Streptomyces cinnamonensis) protein is Valine dehydrogenase (vdh).